The primary structure comprises 178 residues: MDPFGSSSVPPCSTSDLPEPKLYFVRLSPHAVPPVRATHGAAGYDLFSAYDIKVPARGRALVPTDLVFQFPPGCYGRIAPRSGLAAKFFIDVGAGVIDPDYRGNVSVVLFNFSESSFNIRRGDRVAQLILERIMVPELSELTQLGETDRGASGFGSTGMGAVDRNQRSVLEWLTPGSR.

Belongs to the dUTPase family. It depends on Mg(2+) as a cofactor.

The enzyme catalyses dUTP + H2O = dUMP + diphosphate + H(+). It participates in pyrimidine metabolism; dUMP biosynthesis; dUMP from dCTP (dUTP route): step 2/2. This enzyme is involved in nucleotide metabolism: it produces dUMP, the immediate precursor of thymidine nucleotides and it decreases the intracellular concentration of dUTP so that uracil cannot be incorporated into DNA. This is Deoxyuridine 5'-triphosphate nucleotidohydrolase from Fowl adenovirus A serotype 1 (strain CELO / Phelps) (FAdV-1).